Consider the following 280-residue polypeptide: Eukaryotic translation initiation factor 3 subunit F-1 (280 aa).

Residues 8–138 (VRVHPVVLFQ…LRAYVCIQLG (131 aa)) enclose the MPN domain.

This sequence belongs to the eIF-3 subunit F family. In terms of assembly, component of the eukaryotic translation initiation factor 3 (eIF-3) complex. The eIF-3 complex interacts with pix.

The protein resides in the cytoplasm. Functionally, component of the eukaryotic translation initiation factor 3 (eIF-3) complex, which is involved in protein synthesis of a specialized repertoire of mRNAs and, together with other initiation factors, stimulates binding of mRNA and methionyl-tRNAi to the 40S ribosome. The eIF-3 complex specifically targets and initiates translation of a subset of mRNAs involved in cell proliferation. This Drosophila virilis (Fruit fly) protein is Eukaryotic translation initiation factor 3 subunit F-1.